Here is a 238-residue protein sequence, read N- to C-terminus: Snake venom metalloproteinase HF-1 (238 aa).

The region spanning 17-221 is the Peptidase M12B domain; sequence RYIQLVVVAD…YNPQCILNKP (205 aa). A Ca(2+)-binding site is contributed by Asp-106. Cystine bridges form between Cys-130/Cys-216 and Cys-174/Cys-181. A Zn(2+)-binding site is contributed by His-158. Residue Glu-159 is part of the active site. Zn(2+) contacts are provided by His-162 and His-168. Ca(2+)-binding residues include Cys-216 and Asn-219.

As to quaternary structure, monomer. Requires Zn(2+) as cofactor. As to expression, expressed by the venom gland.

The protein resides in the secreted. Inhibited by EDTA and EGTA. Inhibited by serum and antihemorrhagic factors Da2-I and Da2-II from D.albiventris. Not inhibited by PMSF or SBT-I. Functionally, snake venom zinc metalloprotease that is weakly hemorrhagic and has Aalpha, Bbeta fibrinogenolytic activities. Cleaves the Aalpha chain of fibrinogen first, followed by the Bbeta chain and shows no effect on the gamma chain. Has caseinolytic activity. Induces dose-dependent edema. This is Snake venom metalloproteinase HF-1 from Bothrops marajoensis (Marajo lancehead).